Here is a 404-residue protein sequence, read N- to C-terminus: Calcium/calmodulin-dependent protein kinase cmkB (404 aa).

The 262-residue stretch at 18–279 (YKTGKTLGAG…AHQALQHPWI (262 aa)) folds into the Protein kinase domain. ATP is bound by residues 24–32 (LGAGLYSVV) and Lys-47. Asp-141 acts as the Proton acceptor in catalysis. Thr-179 carries the post-translational modification Phosphothreonine; by cmkC. The interval 279-322 (INPPYDTTDDLGSGEDLLPNIKKNFNARRTLHKAIDTVRAINKL) is autoinhibitory domain. Residues 301–323 (KNFNARRTLHKAIDTVRAINKLR) are calmodulin-binding. A disordered region spans residues 336 to 404 (VDPKPEHVNG…WSRTAPRSER (69 aa)). Composition is skewed to basic and acidic residues over residues 338-370 (PKPEHVNGSEVVEDRTTPRERENEDAMEIDSRS) and 379-389 (QIREQERKVKE).

It belongs to the protein kinase superfamily. CAMK Ser/Thr protein kinase family. CaMK subfamily. In terms of processing, phosphorylated by cmkC on Thr-179.

It catalyses the reaction L-seryl-[protein] + ATP = O-phospho-L-seryl-[protein] + ADP + H(+). The enzyme catalyses L-threonyl-[protein] + ATP = O-phospho-L-threonyl-[protein] + ADP + H(+). With respect to regulation, activated by Ca(2+)/calmodulin. Binding of calmodulin results in conformational change that relieves intrasteric autoinhibition and allows phosphorylation of Thr-179 within the activation loop by cmkC. In terms of biological role, calcium/calmodulin-dependent protein kinase that operates in the calcium-triggered CaMKK-CaMK1 signaling cascade. Required in G1-phase of the cell cycle for proper timing of the initial nuclear division after germination, but not for subsequent mitoses. Required for the normal temporal regulation of nimX activity. This Emericella nidulans (Aspergillus nidulans) protein is Calcium/calmodulin-dependent protein kinase cmkB.